A 214-amino-acid polypeptide reads, in one-letter code: MLKAPIGLLGGTFDPIHIGHLRPAIDARDALGLAEIRLIPNHIPPHKANPFCSSEQRLAMVRLAAAENPGFVVDERELKRDKPSYTIDTLMALREELPDTPLCFLMGMDSLLTLPSWHRWQALLDYAHLVVSVRPGWQPDYPTKVAELLARHHTTDATALHRRLAGHIWLADNLPIALSATRLRELLAAGQDPRYLLPASVADYIRQQGLYQAD.

This sequence belongs to the NadD family.

It catalyses the reaction nicotinate beta-D-ribonucleotide + ATP + H(+) = deamido-NAD(+) + diphosphate. Its pathway is cofactor biosynthesis; NAD(+) biosynthesis; deamido-NAD(+) from nicotinate D-ribonucleotide: step 1/1. In terms of biological role, catalyzes the reversible adenylation of nicotinate mononucleotide (NaMN) to nicotinic acid adenine dinucleotide (NaAD). This is Probable nicotinate-nucleotide adenylyltransferase from Aeromonas salmonicida (strain A449).